Reading from the N-terminus, the 181-residue chain is Oligoribonuclease (181 aa).

One can recognise an Exonuclease domain in the interval 8-171 (LIWIDLEMTG…DDIRESVAEL (164 aa)). Residue Y129 is part of the active site.

This sequence belongs to the oligoribonuclease family.

It localises to the cytoplasm. Functionally, 3'-to-5' exoribonuclease specific for small oligoribonucleotides. The protein is Oligoribonuclease of Yersinia enterocolitica serotype O:8 / biotype 1B (strain NCTC 13174 / 8081).